The primary structure comprises 565 residues: NAD-dependent malic enzyme (565 aa).

The active-site Proton donor is Tyr104. Arg157 is an NAD(+) binding site. Lys175 serves as the catalytic Proton acceptor. Residues Glu246, Asp247, and Asp270 each contribute to the a divalent metal cation site. Residues Asp270 and Asn418 each coordinate NAD(+).

Belongs to the malic enzymes family. As to quaternary structure, homotetramer. Requires Mg(2+) as cofactor. It depends on Mn(2+) as a cofactor.

It catalyses the reaction (S)-malate + NAD(+) = pyruvate + CO2 + NADH. It carries out the reaction oxaloacetate + H(+) = pyruvate + CO2. The polypeptide is NAD-dependent malic enzyme (Yersinia pseudotuberculosis serotype O:1b (strain IP 31758)).